Here is a 292-residue protein sequence, read N- to C-terminus: 4-hydroxy-tetrahydrodipicolinate synthase (292 aa).

Thr-45 serves as a coordination point for pyruvate. The active-site Proton donor/acceptor is Tyr-133. Lys-161 serves as the catalytic Schiff-base intermediate with substrate. Ile-203 contacts pyruvate.

It belongs to the DapA family. In terms of assembly, homotetramer; dimer of dimers.

The protein resides in the cytoplasm. The catalysed reaction is L-aspartate 4-semialdehyde + pyruvate = (2S,4S)-4-hydroxy-2,3,4,5-tetrahydrodipicolinate + H2O + H(+). The protein operates within amino-acid biosynthesis; L-lysine biosynthesis via DAP pathway; (S)-tetrahydrodipicolinate from L-aspartate: step 3/4. Functionally, catalyzes the condensation of (S)-aspartate-beta-semialdehyde [(S)-ASA] and pyruvate to 4-hydroxy-tetrahydrodipicolinate (HTPA). The chain is 4-hydroxy-tetrahydrodipicolinate synthase from Vibrio vulnificus (strain YJ016).